The sequence spans 298 residues: UDP-N-acetylenolpyruvoylglucosamine reductase (298 aa).

The FAD-binding PCMH-type domain occupies 26 to 191 (KTGGEAEYLA…LSATFSLKPG (166 aa)). The active site involves Arg-170. Ser-220 serves as the catalytic Proton donor. The active site involves Glu-290.

It belongs to the MurB family. FAD is required as a cofactor.

The protein localises to the cytoplasm. The enzyme catalyses UDP-N-acetyl-alpha-D-muramate + NADP(+) = UDP-N-acetyl-3-O-(1-carboxyvinyl)-alpha-D-glucosamine + NADPH + H(+). The protein operates within cell wall biogenesis; peptidoglycan biosynthesis. Cell wall formation. This chain is UDP-N-acetylenolpyruvoylglucosamine reductase, found in Lactobacillus acidophilus (strain ATCC 700396 / NCK56 / N2 / NCFM).